The chain runs to 303 residues: MYYGFDIGGTKIALGVFDSGRQLQWEKRVPTPRDSYDAFLDAVCELVAEADQRFGCKGSVGIGIPGMPETEDGTLYAANVPAASGKPLRADLSARLDRDVRLDNDANCFALSEAWDDEFTQYPLVMGLILGTGVGGGLIFNGKPITGKSYITGEFGHMRLPVDALTMMGLDFPLRRCGCGQIGCIENYLSGRGFAWLWQHYYHQPLQAPEIIALYDQGDEQARAHVERYLDLLAVCLGNILTIVDSDLVVIGGGLSNFPAITTQLADRLPRHLLPVARVPRIERARHGDAGGMRGAAFLHLTD.

Residues 4–11 and 133–140 contribute to the ATP site; these read GFDIGGTK and GVGGGLIF. Zn(2+) contacts are provided by H157, C177, C179, and C184.

The protein belongs to the ROK (NagC/XylR) family. NagK subfamily.

The enzyme catalyses N-acetyl-D-glucosamine + ATP = N-acetyl-D-glucosamine 6-phosphate + ADP + H(+). Its pathway is cell wall biogenesis; peptidoglycan recycling. Functionally, catalyzes the phosphorylation of N-acetyl-D-glucosamine (GlcNAc) derived from cell-wall degradation, yielding GlcNAc-6-P. This is N-acetyl-D-glucosamine kinase from Shigella sonnei (strain Ss046).